A 576-amino-acid polypeptide reads, in one-letter code: 4-alpha-glucanotransferase, chloroplastic/amyloplastic (576 aa).

The transit peptide at methionine 1 to alanine 52 directs the protein to the chloroplast.

It belongs to the disproportionating enzyme family. Present in leaves, stems, roots, and stolons but is most abundant in developing and mature tubers.

The protein resides in the plastid. The protein localises to the chloroplast. It localises to the amyloplast. The enzyme catalyses Transfers a segment of a (1-&gt;4)-alpha-D-glucan to a new position in an acceptor, which may be glucose or a (1-&gt;4)-alpha-D-glucan.. Its function is as follows. May act during starch breakdown to convert small oligosaccharides into larger molecules upon which starch phosphorylase can act, or may change the structure of starch molecules and grain architecture by modifying chain length, or may generate from starch and glucose oligosaccharides which can serve either as primers for new starch phosphoenzyme. The protein is 4-alpha-glucanotransferase, chloroplastic/amyloplastic (DPEP) of Solanum tuberosum (Potato).